We begin with the raw amino-acid sequence, 200 residues long: 3-isopropylmalate dehydratase small subunit (200 aa).

The protein belongs to the LeuD family. LeuD type 1 subfamily. As to quaternary structure, heterodimer of LeuC and LeuD.

The catalysed reaction is (2R,3S)-3-isopropylmalate = (2S)-2-isopropylmalate. The protein operates within amino-acid biosynthesis; L-leucine biosynthesis; L-leucine from 3-methyl-2-oxobutanoate: step 2/4. In terms of biological role, catalyzes the isomerization between 2-isopropylmalate and 3-isopropylmalate, via the formation of 2-isopropylmaleate. The protein is 3-isopropylmalate dehydratase small subunit of Arthrobacter sp. (strain FB24).